Here is a 503-residue protein sequence, read N- to C-terminus: Annexin A11 (503 aa).

Composition is skewed to pro residues over residues 80 to 117 and 123 to 167; these read GYPPVPPGGFGQPPPAQQPVPPYGMYPPPGGNPPPGMP and PGAP…PVPS. Residues 80–172 are disordered; the sequence is GYPPVPPGGF…QPVPSYPGYS (93 aa). 4 Annexin repeats span residues 198-269, 270-341, 353-425, and 429-500; these read FDPL…ALMK, TPVL…SLSQ, SLVQ…AVVK, and NTPA…KICG. Lysine 246 and lysine 253 each carry N6-acetyllysine. Lysine 477 is modified (N6-acetyllysine).

Belongs to the annexin family. In terms of assembly, interacts with S100A6. Interacts with PDCD6 in a calcium-dependent manner. Interacts with KIF23 during cytokinesis.

The protein localises to the cytoplasm. It localises to the melanosome. Its subcellular location is the nucleus envelope. It is found in the nucleus. The protein resides in the nucleoplasm. The protein localises to the cytoskeleton. It localises to the spindle. Functionally, required for midbody formation and completion of the terminal phase of cytokinesis. Binds specifically to calcyclin in a calcium-dependent manner. The sequence is that of Annexin A11 (Anxa11) from Mus musculus (Mouse).